A 708-amino-acid chain; its full sequence is MISKYCRLSSPRSDLIIKTHPHAEIIWWGSALKHFSPDDCASLERPVANGRLDIDTPLTLIAENALGLFSSPGLEGHRNGLDASPVFYTVDVEHTENTLRLTSEDSVAGLRLVSELVMTPSGILKVRHALTNLREGDWQINRFAITLPVAERAEEVMAFHGRWTREFQPHRVRLTHDAFVLENRRGRTSHEHFPALIVGTPGFSEQQGEVWAVHLGWSGNHRMRCEAKTDGRRYVQAEALWMPGEKALRKNETLYTPWLYACHSADGLNGMSQQYHRFLRDEIIRFPEQKLRPVHLNTWEGIYFNHNPDYIMQMAERAAALGVERFIIDDGWFKGRNDDRAALGDWYTDEQKYPNGLMPVINHVKSLGMEFGIWVEPEMINPDSDLFRLHPDWILSMPGYSQPTGRYQYVLNLNIPEAFDYIYKRFLWLLGEHPVDYVKWDMNRELVQAGHEGRAAADAQTRQFYRLLDLLRERFPHVEFESCASGGGRIDFEVLKRTHRFWASDNNDALERCTIQRGMSYFFPPEVMGAHIGHRRCHATFRQHSIAFRGLTALFGHMGLELDPVAADAKESDGYRRYALLYKEWRQLIHTGVLWRVDMPDSSIQVQGVVSPDQSQALFMISQLAMPDYTLPGILRFPGLAAEVRYRLRVIDHPEIQLVGEGGHTMRRLPAWMNQPLEASGEWLAKGGIQLPVLDPESAILIALERAV.

Asp-441 acts as the Nucleophile in catalysis. Asp-505 serves as the catalytic Proton donor.

This sequence belongs to the glycosyl hydrolase 36 family. As to quaternary structure, homotetramer.

The catalysed reaction is Hydrolysis of terminal, non-reducing alpha-D-galactose residues in alpha-D-galactosides, including galactose oligosaccharides, galactomannans and galactolipids.. This chain is Alpha-galactosidase (rafA), found in Escherichia coli.